We begin with the raw amino-acid sequence, 537 residues long: Chaperonin GroEL 2 (537 aa).

Residues 29 to 32 (TLGP), 86 to 90 (DGTTT), Gly-412, and Asp-495 contribute to the ATP site.

It belongs to the chaperonin (HSP60) family. In terms of assembly, forms a cylinder of 14 subunits composed of two heptameric rings stacked back-to-back. Interacts with the co-chaperonin GroES.

Its subcellular location is the cytoplasm. The enzyme catalyses ATP + H2O + a folded polypeptide = ADP + phosphate + an unfolded polypeptide.. Together with its co-chaperonin GroES, plays an essential role in assisting protein folding. The GroEL-GroES system forms a nano-cage that allows encapsulation of the non-native substrate proteins and provides a physical environment optimized to promote and accelerate protein folding. The sequence is that of Chaperonin GroEL 2 from Paenarthrobacter aurescens (strain TC1).